A 195-amino-acid chain; its full sequence is HTH-type transcriptional regulator BetI (195 aa).

The 61-residue stretch at 8 to 68 folds into the HTH tetR-type domain; the sequence is EIRRAQLIDA…ATMRHVLRDL (61 aa). The segment at residues 31–50 is a DNA-binding region (H-T-H motif); the sequence is TLASVAQRASISTGIVSHYF.

Its pathway is amine and polyamine biosynthesis; betaine biosynthesis via choline pathway [regulation]. Repressor involved in the biosynthesis of the osmoprotectant glycine betaine. It represses transcription of the choline transporter BetT and the genes of BetAB involved in the synthesis of glycine betaine. This Paraburkholderia xenovorans (strain LB400) protein is HTH-type transcriptional regulator BetI.